We begin with the raw amino-acid sequence, 423 residues long: Imidazolonepropionase (423 aa).

The Fe(3+) site is built by His-78 and His-80. Positions 78 and 80 each coordinate Zn(2+). 4-imidazolone-5-propanoate is bound by residues Arg-87, Tyr-150, and His-183. Position 150 (Tyr-150) interacts with N-formimidoyl-L-glutamate. His-247 is a Fe(3+) binding site. Residue His-247 participates in Zn(2+) binding. Glu-250 lines the 4-imidazolone-5-propanoate pocket. Asp-322 provides a ligand contact to Fe(3+). A Zn(2+)-binding site is contributed by Asp-322. N-formimidoyl-L-glutamate contacts are provided by Asn-324 and Gly-326. Ser-327 is a 4-imidazolone-5-propanoate binding site.

Belongs to the metallo-dependent hydrolases superfamily. HutI family. Zn(2+) is required as a cofactor. It depends on Fe(3+) as a cofactor.

It localises to the cytoplasm. The catalysed reaction is 4-imidazolone-5-propanoate + H2O = N-formimidoyl-L-glutamate. It functions in the pathway amino-acid degradation; L-histidine degradation into L-glutamate; N-formimidoyl-L-glutamate from L-histidine: step 3/3. Functionally, catalyzes the hydrolytic cleavage of the carbon-nitrogen bond in imidazolone-5-propanoate to yield N-formimidoyl-L-glutamate. It is the third step in the universal histidine degradation pathway. The chain is Imidazolonepropionase from Bacillus cereus (strain G9842).